The primary structure comprises 72 residues: Translation initiation factor IF-1 (72 aa).

The S1-like domain occupies 1-72 (MAKDGVIEVE…NRGRITYRYK (72 aa)).

This sequence belongs to the IF-1 family. In terms of assembly, component of the 30S ribosomal translation pre-initiation complex which assembles on the 30S ribosome in the order IF-2 and IF-3, IF-1 and N-formylmethionyl-tRNA(fMet); mRNA recruitment can occur at any time during PIC assembly.

The protein localises to the cytoplasm. Functionally, one of the essential components for the initiation of protein synthesis. Stabilizes the binding of IF-2 and IF-3 on the 30S subunit to which N-formylmethionyl-tRNA(fMet) subsequently binds. Helps modulate mRNA selection, yielding the 30S pre-initiation complex (PIC). Upon addition of the 50S ribosomal subunit IF-1, IF-2 and IF-3 are released leaving the mature 70S translation initiation complex. This Bifidobacterium adolescentis (strain ATCC 15703 / DSM 20083 / NCTC 11814 / E194a) protein is Translation initiation factor IF-1.